Consider the following 324-residue polypeptide: Lipoyl synthase (324 aa).

[4Fe-4S] cluster-binding residues include Cys-65, Cys-70, Cys-76, Cys-91, Cys-95, Cys-98, and Ser-302. One can recognise a Radical SAM core domain in the interval 77–291; that stretch reads WEDREATFLI…AQYAEGLGFA (215 aa).

The protein belongs to the radical SAM superfamily. Lipoyl synthase family. [4Fe-4S] cluster serves as cofactor.

The protein resides in the cytoplasm. It carries out the reaction [[Fe-S] cluster scaffold protein carrying a second [4Fe-4S](2+) cluster] + N(6)-octanoyl-L-lysyl-[protein] + 2 oxidized [2Fe-2S]-[ferredoxin] + 2 S-adenosyl-L-methionine + 4 H(+) = [[Fe-S] cluster scaffold protein] + N(6)-[(R)-dihydrolipoyl]-L-lysyl-[protein] + 4 Fe(3+) + 2 hydrogen sulfide + 2 5'-deoxyadenosine + 2 L-methionine + 2 reduced [2Fe-2S]-[ferredoxin]. It functions in the pathway protein modification; protein lipoylation via endogenous pathway; protein N(6)-(lipoyl)lysine from octanoyl-[acyl-carrier-protein]: step 2/2. Its function is as follows. Catalyzes the radical-mediated insertion of two sulfur atoms into the C-6 and C-8 positions of the octanoyl moiety bound to the lipoyl domains of lipoate-dependent enzymes, thereby converting the octanoylated domains into lipoylated derivatives. The sequence is that of Lipoyl synthase from Mycobacterium ulcerans (strain Agy99).